The following is a 316-amino-acid chain: ATP synthase gamma chain (316 aa).

This sequence belongs to the ATPase gamma chain family. F-type ATPases have 2 components, CF(1) - the catalytic core - and CF(0) - the membrane proton channel. CF(1) has five subunits: alpha(3), beta(3), gamma(1), delta(1), epsilon(1). CF(0) has three main subunits: a, b and c.

Its subcellular location is the cellular thylakoid membrane. In terms of biological role, produces ATP from ADP in the presence of a proton gradient across the membrane. The gamma chain is believed to be important in regulating ATPase activity and the flow of protons through the CF(0) complex. The protein is ATP synthase gamma chain of Prochlorococcus marinus (strain MIT 9312).